The sequence spans 455 residues: Putative PTS system EIIBC component YbbF (455 aa).

In terms of domain architecture, PTS EIIB type-1 spans His8 to Ala90. The active-site Phosphocysteine intermediate; for EIIB activity is the Cys30. The region spanning Arg116 to Asp455 is the PTS EIIC type-1 domain. The next 10 membrane-spanning stretches (helical) occupy residues Ile118 to Ile138, Ile154 to Gly174, Phe181 to Ala201, Leu210 to Thr230, Val250 to Ile270, Ile281 to Val301, Leu325 to Val345, Ala355 to Val375, Tyr399 to Leu419, and Ile423 to Ala443.

The protein resides in the cell membrane. Its function is as follows. The phosphoenolpyruvate-dependent sugar phosphotransferase system (sugar PTS), a major carbohydrate active -transport system, catalyzes the phosphorylation of incoming sugar substrates concomitantly with their translocation across the cell membrane. In Bacillus subtilis (strain 168), this protein is Putative PTS system EIIBC component YbbF (ybbF).